The following is a 37-amino-acid chain: Cytochrome b6-f complex subunit 5 (37 aa).

A helical transmembrane segment spans residues 5–25 (LLSGIVLGLIPITLAGLFVTA).

This sequence belongs to the PetG family. In terms of assembly, the 4 large subunits of the cytochrome b6-f complex are cytochrome b6, subunit IV (17 kDa polypeptide, PetD), cytochrome f and the Rieske protein, while the 4 small subunits are PetG, PetL, PetM and PetN. The complex functions as a dimer.

The protein resides in the plastid. Its subcellular location is the chloroplast thylakoid membrane. Functionally, component of the cytochrome b6-f complex, which mediates electron transfer between photosystem II (PSII) and photosystem I (PSI), cyclic electron flow around PSI, and state transitions. PetG is required for either the stability or assembly of the cytochrome b6-f complex. The chain is Cytochrome b6-f complex subunit 5 from Angiopteris evecta (Mule's foot fern).